A 583-amino-acid polypeptide reads, in one-letter code: COP9 signalosome complex subunit 10 (583 aa).

Residues 1–35 (MSDEEDYAEYMMSEEDMSSFEMDVDSDVEPDDAGL) are compositionally biased toward acidic residues. The tract at residues 1–55 (MSDEEDYAEYMMSEEDMSSFEMDVDSDVEPDDAGLEQDQQVTGDDYDGSAGNSGD) is disordered. The region spanning 297-485 (DHYNQSQMLS…DYVYFGEEYF (189 aa)) is the PCI domain.

Component of a COP9 signalosome-like (CSN) complex.

The protein localises to the cytoplasm. Its subcellular location is the nucleus. In terms of biological role, component of the COP9 signalosome (CSN) complex that acts as an regulator of the ubiquitin (Ubl) conjugation pathway by mediating the deneddylation of the cullin subunit of SCF-type E3 ubiquitin-protein ligase complexes. The CSN complex is involved in the regulation of the mating pheromone response. This chain is COP9 signalosome complex subunit 10 (RRI2), found in Kluyveromyces lactis (strain ATCC 8585 / CBS 2359 / DSM 70799 / NBRC 1267 / NRRL Y-1140 / WM37) (Yeast).